Reading from the N-terminus, the 2188-residue chain is MTAATPDRRAIITEALHKIDDLTARLEIAEKSSSEPIAVIGMGCRFPGGVNNPEQFWDLLCAGRSGIVRVPAQRWDADAYYCDDHTVPGTICSTEGGFLTSWQPDEFDAEFFSISPREAAAMDPQQRLLIEVAWEALEDAGVPQHTIRGTQTSVFVGVTAYDYMLTLAGRLRPVDLDAYIPTGNSANFAAGRLAYILGARGPAVVIDTACSSSLVAVHLACQSLRGRESDMALVGGTNLLLSPGPSIACSRWGMLSPEGRCKTFDASADGYVRGEGAAVVVLKRLDDAVRDGNRILAVVRGSAVNQDGASSGVTVPNGPAQQALLAKALTSSKLTAADIDYVEAHGTGTPLGDPIELDSLSKVFSDRAGSDQLVIGSVKTNLGHLEAAAGVAGLMKAVLAVHNGYIPRHLNFHQLTPHASEAASRLRIAADGIDWPTTGRPRRAGVSSFGVSGTNAHVVIEQAPDPMAAAGTEPQRGPVPAVSTLVVFGKTAPRVAATASVLADWLDGPGAAVPLADVAHTLNHHRARQTRFGTVAAVDRRQAVIGLRALAAGQSAPGVVAPREGSIGGGTVFVYSGRGSQWAGMGRQLLADEPAFAAAIAELEPEFVAQGGFSLRDVIAGGKELVGIEQIQLGLIGMQLALTALWRSYGVTPDAVIGHSMGEVAAAVVAGALTPAQGLRVTAVRSRLMAPLSGQGTMALLELDAEATEALIADYPEVSLGIYASPRQTVISGPPLLIDELIDKVRQQNGFATRVNIEVAPHNPAMDALQPAMRSELADLTPQPPTIPIISTTYADLGISLGSGPRFDAEHWATNMRNPVRFHQAIAHAGADHHTFIEISAHPLLTHSISDTLRASYDVDNYLSIGTLQRDAHDTLEFHTNLNTTHTTHPPQTPHPPEPHPVLPTTPWQHTQHWITATSAAYHRPDTHPLLGVGVTDPTNGTRVWESELDPDLLWLADHVIDDLVVLPGAAYAEIALAAATDTFAVEQDQPWMISELDLRQMLHVTPGTVLVTTLTGDEQRCQVEIRTRSGSSGWTTHATATVARAEPLAPLDHEGQRREVTTADLEDQLDPDDLYQRLRGAGQQHGPAFQGIVGLAVTQAGVARAQVRLPASARTGSREFMLHPVMMDIALQTLGATRTATDLAGGQDARQGPSSNSALVVPVRFAGVHVYGDITRGVRAVGSLAAAGDRLVGEVVLTDANGQPLLVVDEVEMAVLGSGSGATELTNRLFMLEWEPAPLEKTAEATGALLLIGDPAAGDPLLPALQSSLRDRITDLELASAADEATLRAAISRTSWDGIVVVCPPRANDESMPDEAQLELARTRTLLVASVVETVTRMGARKSPRLWIVTRGAAQFDAGESVTLAQTGLRGIARVLTFEHSELNTTLVDIEPDGTGSLAALAEELLAGSEADEVALRDGQRYVNRLVPAPTTTSGDLAAEARHQVVNLDSSGASRAAVRLQIDQPGRLDALNVHEVKRGRPQGDQVEVRVVAAGLNFSDVLKAMGVYPGLDGAAPVIGGECVGYVTAIGDEVDGVEVGQRVIAFGPGTFGTHLGTIADLVVPIPDTLADNEAATFGVAYLTAWHSLCEVGRLSPGERVLIHSATGGVGMAAVSIAKMIGARIYTTAGSDAKREMLSRLGVEYVGDSRSVDFADEILELTDGYGVDVVLNSLAGEAIQRGVQILAPGGRFIELGKKDVYADASLGLAALAKSASFSVVDLDLNLKLQPARYRQLLQHILQHVADGKLEVLPVTAFSLHDAADAFRLMASGKHTGKIVISIPQHGSIEAIAAPPPLPLVSRDGGYLIVGGMGGLGFVVARWLAEQGAGLIVLNGRSAPSDEVAAAIAELNASGSRIEVITGDITEPDTAERLVRAVEDAGFRLAGVVHSAMVLADEIVLNMTDSAARRVFAPKVTGSWRLHVATAARDVDWWLTFSSAAALLGTPGQGAYAAANSWVDGLVAHRRSAGLPAVGINWGPWADVGRAQFFKDLGVEMINAEQGLAAMQAVLTADRGRTGVFSLDARQWFQSFPAVAGSSLFAKLHDSAARKSGQRRGGGAIRAQLDALDAAERPGHLASAIADEIRAVLRSGDPIDHHRPLETLGLDSLMGLELRNRLEASLGITLPVALVWAYPTISDLATALCERMDYATPAAAQEISDTEPELSDEEMDLLADLVDASELEAATRGES.

A Ketosynthase family 3 (KS3) domain is found at 34–462 (SEPIAVIGMG…GTNAHVVIEQ (429 aa)). Residues cysteine 210, histidine 345, and histidine 384 each act as for beta-ketoacyl synthase activity in the active site. Residues 572–890 (VFVYSGRGSQ…NLNTTHTTHP (319 aa)) are acyltransferase. Serine 660 acts as the For malonyltransferase activity in catalysis. The interval 928–1050 (HPLLGVGVTD…ATVARAEPLA (123 aa)) is N-terminal hotdog fold. A dehydratase region spans residues 928 to 1093 (HPLLGVGVTD…QQHGPAFQGI (166 aa)). The region spanning 928 to 1223 (HPLLGVGVTD…MAVLGSGSGA (296 aa)) is the PKS/mFAS DH domain. Histidine 959 serves as the catalytic Proton acceptor; for dehydratase activity. The C-terminal hotdog fold stretch occupies residues 1067-1223 (EDQLDPDDLY…MAVLGSGSGA (157 aa)). The active-site Proton donor; for dehydratase activity is aspartate 1129. Positions 1467 to 1778 (GRLDALNVHE…SGKHTGKIVI (312 aa)) are enoylreductase. The beta-ketoacyl reductase stretch occupies residues 1802-1981 (GGYLIVGGMG…GINWGPWADV (180 aa)). Residue 1803–1848 (GYLIVGGMGGLGFVVARWLAEQGAGLIVLNGRSAPSDEVAAAIAEL) coordinates NADP(+). The Carrier domain occupies 2069-2145 (ERPGHLASAI…DLATALCERM (77 aa)). Serine 2105 is modified (O-(pantetheine 4'-phosphoryl)serine).

In terms of assembly, homodimer. It depends on NADP(+) as a cofactor. Requires pantetheine 4'-phosphate as cofactor.

The enzyme catalyses icosanoyl-[(phenol)carboxyphthiodiolenone synthase] + 2 (S)-methylmalonyl-CoA + 3 malonyl-CoA + 5 NADPH + 10 H(+) = C32-carboxyphthiodiolenone-[(phenol)carboxyphthiodiolenone synthase] + 5 CO2 + 5 NADP(+) + 5 CoA + 2 H2O. It carries out the reaction docosanoyl-[(phenol)carboxyphthiodiolenone synthase] + 2 (S)-methylmalonyl-CoA + 3 malonyl-CoA + 5 NADPH + 10 H(+) = C34-carboxyphthiodiolenone-[(phenol)carboxyphthiodiolenone synthase] + 5 CO2 + 5 NADP(+) + 5 CoA + 2 H2O. It catalyses the reaction 17-(4-hydroxyphenyl)heptadecanoyl-[(phenol)carboxyphthiodiolenone synthase] + 2 (S)-methylmalonyl-CoA + 3 malonyl-CoA + 5 NADPH + 10 H(+) = C35-(phenol)carboxyphthiodiolenone-[(phenol)carboxyphthiodiolenone synthase] + 5 CO2 + 5 NADP(+) + 5 CoA + 2 H2O. The catalysed reaction is 19-(4-hydroxyphenyl)nonadecanoyl-[(phenol)carboxyphthiodiolenone synthase] + 2 (S)-methylmalonyl-CoA + 3 malonyl-CoA + 5 NADPH + 10 H(+) = C37-(phenol)carboxyphthiodiolenone-[(phenol)carboxyphthiodiolenone synthase] + 5 CO2 + 5 NADP(+) + 5 CoA + 2 H2O. It functions in the pathway lipid metabolism; fatty acid biosynthesis. Functionally, part of the PpsABCDE complex involved in the biosynthesis of the lipid core common to phthiocerols and phenolphthiocerols by successive additions of malonyl-CoA or methylmalonyl-CoA extender units. PpsA can accept as substrate the activated forms of either icosanoyl (C20), docosanoyl (C22) or lignoceroyl (C24) groups from FadD26, or a (4-hydroxyphenyl)-C17 or (4-hydroxyphenyl)-C19 fatty acyl from FadD29. PpsA initiates the biosynthesis and extends its substrate using a malonyl-CoA extender unit. The PpsB and PpsC proteins add the second and third malonyl-CoA extender units. PpsD adds an (R)-methylmalonyl unit and PpsE adds a second (R)-methylmalonyl unit. The incorporation of the methylmalonyl units results in formation of two branched methyl groups in the elongated product. This Mycobacterium bovis (strain ATCC BAA-935 / AF2122/97) protein is Phenolphthiocerol/phthiocerol polyketide synthase subunit C (ppsC).